The sequence spans 715 residues: Glycine--tRNA ligase beta subunit (715 aa).

Belongs to the class-II aminoacyl-tRNA synthetase family. In terms of assembly, tetramer of two alpha and two beta subunits.

The protein resides in the cytoplasm. The catalysed reaction is tRNA(Gly) + glycine + ATP = glycyl-tRNA(Gly) + AMP + diphosphate. The sequence is that of Glycine--tRNA ligase beta subunit from Nitrosomonas europaea (strain ATCC 19718 / CIP 103999 / KCTC 2705 / NBRC 14298).